The primary structure comprises 379 residues: Dual-specificity RNA methyltransferase RlmN (379 aa).

The active-site Proton acceptor is Glu-90. Residues 96–348 (EPSRGTLCVS…TTVRKTRGDD (253 aa)) enclose the Radical SAM core domain. Cys-103 and Cys-353 are joined by a disulfide. Cys-110, Cys-114, and Cys-117 together coordinate [4Fe-4S] cluster. S-adenosyl-L-methionine-binding positions include 179–180 (GE), Ser-211, 233–235 (SLH), and Asn-310. Cys-353 acts as the S-methylcysteine intermediate in catalysis.

Belongs to the radical SAM superfamily. RlmN family. The cofactor is [4Fe-4S] cluster.

It localises to the cytoplasm. It carries out the reaction adenosine(2503) in 23S rRNA + 2 reduced [2Fe-2S]-[ferredoxin] + 2 S-adenosyl-L-methionine = 2-methyladenosine(2503) in 23S rRNA + 5'-deoxyadenosine + L-methionine + 2 oxidized [2Fe-2S]-[ferredoxin] + S-adenosyl-L-homocysteine. The catalysed reaction is adenosine(37) in tRNA + 2 reduced [2Fe-2S]-[ferredoxin] + 2 S-adenosyl-L-methionine = 2-methyladenosine(37) in tRNA + 5'-deoxyadenosine + L-methionine + 2 oxidized [2Fe-2S]-[ferredoxin] + S-adenosyl-L-homocysteine. Specifically methylates position 2 of adenine 2503 in 23S rRNA and position 2 of adenine 37 in tRNAs. m2A2503 modification seems to play a crucial role in the proofreading step occurring at the peptidyl transferase center and thus would serve to optimize ribosomal fidelity. This Nitrosomonas europaea (strain ATCC 19718 / CIP 103999 / KCTC 2705 / NBRC 14298) protein is Dual-specificity RNA methyltransferase RlmN.